The sequence spans 304 residues: Agmatinase (304 aa).

Positions 126, 149, 151, 153, 230, and 232 each coordinate Mn(2+).

Belongs to the arginase family. Agmatinase subfamily. Mn(2+) serves as cofactor.

The catalysed reaction is agmatine + H2O = urea + putrescine. It participates in amine and polyamine biosynthesis; putrescine biosynthesis via agmatine pathway; putrescine from agmatine: step 1/1. Its function is as follows. Catalyzes the formation of putrescine from agmatine. This is Agmatinase from Edwardsiella ictaluri (strain 93-146).